Here is a 505-residue protein sequence, read N- to C-terminus: Cyclic AMP-dependent transcription factor ATF-2 (505 aa).

Positions 1–7 (MKFKLHV) match the Nuclear export signal 1 (N-NES) motif. The segment at 25-49 (FLCTAPGCGQRFTNEDHLAVHKHKH) adopts a C2H2-type zinc-finger fold. The residue at position 52 (Thr52) is a Phosphothreonine; by PKC/PRKCH. Position 62 is a phosphoserine; by VRK1 (Ser62). Residue Thr69 is modified to Phosphothreonine; by MAPK11 and MAPK14. The residue at position 71 (Thr71) is a Phosphothreonine; by MAPK1, MAPK3, MAPK11, MAPK12, MAPK14 and PLK3. At Thr73 the chain carries Phosphothreonine; by VRK1. Phosphoserine is present on residues Ser90 and Ser112. Thr116 is modified (phosphothreonine). At Ser121 the chain carries Phosphoserine; by PKC/PRKCA and PKC/PRKCB. 2 disordered regions span residues 125–155 (EPSVVETTHQDSPLPHPESTTSDEKEVPLAQ) and 259–373 (PGIP…RQKR). Ser136 bears the Phosphoserine mark. Residues 282–293 (LTQQHPPVTNGD) show a composition bias toward polar residues. An essential for its histone acetyltransferase activity region spans residues 296–299 (KGHG). The segment covering 318-334 (PATSTTETPASPAHTTP) has biased composition (low complexity). The residue at position 328 (Ser328) is a Phosphoserine. Ser340 carries the phosphoserine; by PKC/PRKCA and PKC/PRKCB modification. Residues 346 to 363 (AANEDPDEKRRKFLERNR) are compositionally biased toward basic and acidic residues. In terms of domain architecture, bZIP spans 352–415 (DEKRRKFLER…AQLKQLLLAH (64 aa)). Positions 354–374 (KRRKFLERNRAAASRCRQKRK) are basic motif. Lys357 is subject to N6-acetyllysine. A Phosphoserine; by PKC/PRKCA and PKC/PRKCB modification is found at Ser367. Position 374 is an N6-acetyllysine (Lys374). The tract at residues 380-408 (LEKKAEDLSSLNGQLQSEVTLLRNEVAQL) is leucine-zipper. The Nuclear export signal 2 (C-NES) motif lies at 405-414 (VAQLKQLLLA). Residues 425–472 (KKSGYHTADKDDSSEDISVPSSPHTEAIQHSSVSTSNGVSSTSKAEAV) are disordered. Ser442 and Ser446 each carry phosphoserine. Residues 443–454 (VPSSPHTEAIQH) show a composition bias toward polar residues. Residues 455-467 (SSVSTSNGVSSTS) show a composition bias toward low complexity. A phosphoserine; by ATM mark is found at Ser490 and Ser498.

The protein belongs to the bZIP family. ATF subfamily. As to quaternary structure, binds DNA as a dimer and can form a homodimer in the absence of DNA. Can form a heterodimer with JUN. Heterodimerization is essential for its transcriptional activity. Interacts with SMAD3 and SMAD4. Binds through its N-terminal region to UTF1 which acts as a coactivator of ATF2 transcriptional activity. Interacts with the HK1/VDAC1 complex. Interacts with NBN, MRE11, XPO1, KAT5 and CUL3. Post-translationally, phosphorylation of Thr-69 by MAPK14 and MAPK11, and at Thr-71 by MAPK1/ERK2, MAPK3/ERK1, MAPK11, MAPK12 and MAPK14 in response to external stimulus like insulin causes increased transcriptional activity. Phosphorylated by PLK3 following hyperosmotic stress. Also phosphorylated and activated by JNK and CaMK4. ATM-mediated phosphorylation at Ser-490 and Ser-498 stimulates its function in DNA damage response. Phosphorylation at Ser-62, Thr-73 and Ser-121 activates its transcriptional activity. Phosphorylation at Thr-69 or Thr-71 enhances acetylation of histones H2B and H4. In terms of tissue distribution, ubiquitously expressed, with more abundant expression in the brain.

The protein localises to the nucleus. The protein resides in the cytoplasm. It is found in the mitochondrion outer membrane. In terms of biological role, transcriptional activator which regulates the transcription of various genes, including those involved in anti-apoptosis, cell growth, and DNA damage response. Dependent on its binding partner, binds to CRE (cAMP response element) consensus sequences (5'-TGACGTCA-3') or to AP-1 (activator protein 1) consensus sequences (5'-TGACTCA-3'). In the nucleus, contributes to global transcription and the DNA damage response, in addition to specific transcriptional activities that are related to cell development, proliferation and death. In the cytoplasm, interacts with and perturbs HK1- and VDAC1-containing complexes at the mitochondrial outer membrane, thereby impairing mitochondrial membrane potential, inducing mitochondrial leakage and promoting cell death. The phosphorylated form (mediated by ATM) plays a role in the DNA damage response and is involved in the ionizing radiation (IR)-induced S phase checkpoint control and in the recruitment of the MRN complex into the IR-induced foci (IRIF). Exhibits histone acetyltransferase (HAT) activity which specifically acetylates histones H2B and H4 in vitro. In concert with CUL3 and RBX1, promotes the degradation of KAT5 thereby attenuating its ability to acetylate and activate ATM. Can elicit oncogenic or tumor suppressor activities depending on the tissue or cell type. The polypeptide is Cyclic AMP-dependent transcription factor ATF-2 (ATF2) (Homo sapiens (Human)).